The sequence spans 91 residues: Probable Fe(2+)-trafficking protein (91 aa).

The protein belongs to the Fe(2+)-trafficking protein family.

In terms of biological role, could be a mediator in iron transactions between iron acquisition and iron-requiring processes, such as synthesis and/or repair of Fe-S clusters in biosynthetic enzymes. The chain is Probable Fe(2+)-trafficking protein from Xanthomonas axonopodis pv. citri (strain 306).